Reading from the N-terminus, the 199-residue chain is MSWLLGYVDPTEPSFVAAVLTIVFNPLFWNVVARWEQRTRKLSRAFGSPYLACYSLGSIILLLNILRSHCFTQAMMSQPKMEGLDSHTIYFLGLALLGWGLVFVLSSFYALGFTGTFLGDYFGILKESRVTTFPFSVLDNPMYWGSTANYLGWALMHASPTGLLLTVLVALVYVVALLFEEPFTAEIYRRKATRLHKRS.

Residues 2–12 (SWLLGYVDPTE) are Lumenal-facing. An intramembrane region (helical) is located at residues 13 to 33 (PSFVAAVLTIVFNPLFWNVVA). Over 34-45 (RWEQRTRKLSRA) the chain is Lumenal. A helical transmembrane segment spans residues 46-66 (FGSPYLACYSLGSIILLLNIL). The Cytoplasmic portion of the chain corresponds to 67 to 93 (RSHCFTQAMMSQPKMEGLDSHTIYFLG). Residues 94–114 (LALLGWGLVFVLSSFYALGFT) traverse the membrane as a helical segment. 98–100 (GWG) contributes to the S-adenosyl-L-methionine binding site. The Lumenal segment spans residues 115–157 (GTFLGDYFGILKESRVTTFPFSVLDNPMYWGSTANYLGWALMH). The chain crosses the membrane as a helical span at residues 158 to 178 (ASPTGLLLTVLVALVYVVALL). Topologically, residues 179-199 (FEEPFTAEIYRRKATRLHKRS) are cytoplasmic. Position 180-181 (180-181 (EE)) interacts with S-adenosyl-L-methionine.

It belongs to the class VI-like SAM-binding methyltransferase superfamily. PEMT/PEM2 methyltransferase family. As to expression, expressed in liver (at protein level).

The protein resides in the endoplasmic reticulum membrane. The protein localises to the mitochondrion membrane. It catalyses the reaction a 1,2-diacyl-sn-glycero-3-phosphoethanolamine + S-adenosyl-L-methionine = a 1,2-diacyl-sn-glycero-3-phospho-N-methylethanolamine + S-adenosyl-L-homocysteine + H(+). The catalysed reaction is a 1,2-diacyl-sn-glycero-3-phospho-N-methylethanolamine + S-adenosyl-L-methionine = a 1,2-diacyl-sn-glycero-3-phospho-N,N-dimethylethanolamine + S-adenosyl-L-homocysteine + H(+). The enzyme catalyses a 1,2-diacyl-sn-glycero-3-phospho-N,N-dimethylethanolamine + S-adenosyl-L-methionine = a 1,2-diacyl-sn-glycero-3-phosphocholine + S-adenosyl-L-homocysteine + H(+). It carries out the reaction 1,2-di-(9Z-octadecenoyl)-sn-glycero-3-phosphoethanolamine + S-adenosyl-L-methionine = 1,2-di-(9Z-octadecenoyl)-sn-glycero-3-phospho-N-methylethanolamine + S-adenosyl-L-homocysteine + H(+). It catalyses the reaction 1,2-di-(9Z-octadecenoyl)-sn-glycero-3-phospho-N-methylethanolamine + S-adenosyl-L-methionine = 1,2-di-(9Z-octadecenoyl)-sn-glycero-3-phospho-N,N-dimethylethanolamine + S-adenosyl-L-homocysteine + H(+). The catalysed reaction is 1,2-di-(9Z-octadecenoyl)-sn-glycero-3-phospho-N,N-dimethylethanolamine + S-adenosyl-L-methionine = 1,2-di-(9Z-octadecenoyl)-sn-glycero-3-phosphocholine + S-adenosyl-L-homocysteine + H(+). The enzyme catalyses 1,2-di-(9Z,12Z-octadecadienoyl)-sn-glycero-3-phosphoethanolamine + S-adenosyl-L-methionine = 1,2-di-(9Z,12Z-octadecadienoyl)-sn-glycero-3-phospho-N-methylethanolamine + S-adenosyl-L-homocysteine + H(+). It carries out the reaction 1,2-di-(9Z,12Z-octadecadienoyl)-sn-glycero-3-phospho-N-methylethanolamine + S-adenosyl-L-methionine = 1,2-di-(9Z,12Z-octadecadienoyl)-sn-glycero-3-phospho-N,N-dimethylethanolamine + S-adenosyl-L-homocysteine + H(+). It catalyses the reaction 1,2-di-(9Z,12Z-octadecadienoyl)-sn-glycero-3-phospho-N,N-dimethylethanolamine + S-adenosyl-L-methionine = 1,2-di-(9Z,12Z-octadecadienoyl)-sn-glycero-3-phosphocholine + S-adenosyl-L-homocysteine + H(+). The catalysed reaction is 1,2-di-(9Z,12Z,15Z-octadecatrienoyl)-sn-glycero-3-phosphoethanolamine + S-adenosyl-L-methionine = 1,2-di-(9Z,12Z,15Z-octadecatrienoyl)-sn-glycero-3-phospho-N-methylethanolamine + S-adenosyl-L-homocysteine + H(+). The enzyme catalyses 1,2-di-(9Z,12Z,15Z-octadecatrienoyl)-sn-glycero-3-phospho-N-methylethanolamine + S-adenosyl-L-methionine = 1,2-di-(9Z,12Z,15Z-octadecatrienoyl)-sn-glycero-3-phospho-N,N-dimethylethanolamine + S-adenosyl-L-homocysteine + H(+). It carries out the reaction 1,2-di-(9Z,12Z,15Z-octadecatrienoyl)-sn-glycero-3-phospho-N,N-dimethylethanolamine + S-adenosyl-L-methionine = 1,2-di-(9Z,12Z,15Z-octadecatrienoyl)-sn-glycero-3-phosphocholine + S-adenosyl-L-homocysteine + H(+). It catalyses the reaction 1-hexadecanoyl-2-(4Z,7Z,10Z,13Z,16Z,19Z-docosahexaenoyl)-sn-glycero-3-phosphoethanolamine + S-adenosyl-L-methionine = 1-hexadecanoyl-2-(4Z,7Z,10Z,13Z,16Z,19Z-docosahexaenoyl)-sn-glycero-3-phospho-N-methylethanolamine + S-adenosyl-L-homocysteine + H(+). The catalysed reaction is 1-hexadecanoyl-2-(4Z,7Z,10Z,13Z,16Z,19Z-docosahexaenoyl)-sn-glycero-3-phospho-N-methylethanolamine + S-adenosyl-L-methionine = 1-hexadecanoyl-2-(4Z,7Z,10Z,13Z,16Z,19Z-docosahexaenoyl)-sn-glycero-3-phospho-N,N-dimethylethanolamine + S-adenosyl-L-homocysteine + H(+). The enzyme catalyses 1-hexadecanoyl-2-(4Z,7Z,10Z,13Z,16Z,19Z-docosahexaenoyl)-sn-glycero-3-phospho-N,N-dimethylethanolamine + S-adenosyl-L-methionine = 1-hexadecanoyl-2-(4Z,7Z,10Z,13Z,16Z,19Z-docosahexaenoyl)-sn-glycero-3-phosphocholine + S-adenosyl-L-homocysteine + H(+). It functions in the pathway phospholipid metabolism; phosphatidylcholine biosynthesis. Its function is as follows. Catalyzes the three sequential steps of the methylation pathway for the biosynthesis of phosphatidylcholine, a critical and essential component for membrane structure. Uses S-adenosylmethionine (S-adenosyl-L-methionine, SAM or AdoMet) as the methyl group donor for the methylation of phosphatidylethanolamine (1,2-diacyl-sn-glycero-3-phosphoethanolamine, PE) to phosphatidylmonomethylethanolamine (1,2-diacyl-sn-glycero-3-phospho-N-methylethanolamine, PMME), PMME to phosphatidyldimethylethanolamine (1,2-diacyl-sn-glycero-3-phospho-N,N-dimethylethanolamine, PDME), and PDME to phosphatidylcholine (1,2-diacyl-sn-glycero-3-phosphocholine, PC), producing S-adenosyl-L-homocysteine in each step. This Rattus norvegicus (Rat) protein is Phosphatidylethanolamine N-methyltransferase.